The primary structure comprises 688 residues: Potassium-transporting ATPase ATP-binding subunit (688 aa).

A run of 4 helical transmembrane segments spans residues valine 35–alanine 55, alanine 62–alanine 82, isoleucine 219–leucine 239, and valine 260–isoleucine 280. The active-site 4-aspartylphosphate intermediate is the aspartate 313. Residues aspartate 350, glutamate 354, phenylalanine 383–serine 390, and lysine 401 each bind ATP. Positions 524 and 528 each coordinate Mg(2+). A run of 3 helical transmembrane segments spans residues phenylalanine 594–methionine 614, alanine 622–leucine 642, and valine 668–isoleucine 688.

It belongs to the cation transport ATPase (P-type) (TC 3.A.3) family. Type IA subfamily. The system is composed of three essential subunits: KdpA, KdpB and KdpC.

The protein resides in the cell inner membrane. The catalysed reaction is K(+)(out) + ATP + H2O = K(+)(in) + ADP + phosphate + H(+). Functionally, part of the high-affinity ATP-driven potassium transport (or Kdp) system, which catalyzes the hydrolysis of ATP coupled with the electrogenic transport of potassium into the cytoplasm. This subunit is responsible for energy coupling to the transport system and for the release of the potassium ions to the cytoplasm. The chain is Potassium-transporting ATPase ATP-binding subunit from Tolumonas auensis (strain DSM 9187 / NBRC 110442 / TA 4).